A 204-amino-acid polypeptide reads, in one-letter code: RNA-free ribonuclease P (204 aa).

Belongs to the HARP family.

The catalysed reaction is Endonucleolytic cleavage of RNA, removing 5'-extranucleotides from tRNA precursor.. Its function is as follows. RNA-free RNase P that catalyzes the removal of the 5'-leader sequence from pre-tRNA to produce the mature 5'-terminus. This Ignicoccus hospitalis (strain KIN4/I / DSM 18386 / JCM 14125) protein is RNA-free ribonuclease P.